A 121-amino-acid chain; its full sequence is Large ribosomal subunit protein bL12 (121 aa).

It belongs to the bacterial ribosomal protein bL12 family. As to quaternary structure, homodimer. Part of the ribosomal stalk of the 50S ribosomal subunit. Forms a multimeric L10(L12)X complex, where L10 forms an elongated spine to which 2 to 4 L12 dimers bind in a sequential fashion. Binds GTP-bound translation factors.

In terms of biological role, forms part of the ribosomal stalk which helps the ribosome interact with GTP-bound translation factors. Is thus essential for accurate translation. The chain is Large ribosomal subunit protein bL12 from Pseudomonas fluorescens (strain SBW25).